Reading from the N-terminus, the 141-residue chain is MSAVVYFSSASRNTERFVEHCDFPSCGVNVFRIPLQPNAAPLNVREPYIIIVPTYGGGDARKAVPPQVKRFLNDPANREWIRGVIASGNTNFGEAYAAAGPIISRKCHVPLMYRFELMGTREDVHAVREGVRRFFSDTPTD.

Belongs to the NrdI family.

Probably involved in ribonucleotide reductase function. This is Protein NrdI from Bifidobacterium animalis subsp. lactis (strain AD011).